Consider the following 221-residue polypeptide: GTP-binding nuclear protein Ran-2 (221 aa).

The region spanning 10–174 is the Small GTPase Ran-type domain; it reads DYPSFKLVIV…LYLARKLAGD (165 aa). A GTP-binding site is contributed by 21–28; the sequence is DGGTGKTT. A switch-I region spans residues 40 to 48; that stretch reads KKYEPTIGV. GTP contacts are provided by residues glycine 71, 125 to 128, and 153 to 155; these read NKVD and SAK. Residues 71-87 are switch-II; it reads GQEKFGGLRDGYYIHGQ.

This sequence belongs to the small GTPase superfamily. Ran family. Found in a nuclear export complex with RanGTP, exportin and pre-miRNA.

It localises to the nucleus. In terms of biological role, GTP-binding protein involved in nucleocytoplasmic transport. Required for the import of protein into the nucleus and also for RNA export. Involved in chromatin condensation and control of cell cycle. The polypeptide is GTP-binding nuclear protein Ran-2 (RAN2) (Oryza sativa subsp. indica (Rice)).